A 346-amino-acid chain; its full sequence is MVYGVIFGANSYEHEISIVSAVVLKKVLKAQKKFIFCDKNKEFFLIDEEKMNAKTFSSGAYKKEKALVLKQGGFFIKTMLGEKKLDMDVAVNIVHGKDGEDGKIAALLDFYGIKYIGPRIEASVLSFNKALTKLYAQSVGVKTLDYKVLNLHKEQNVSLSFPCILKPARLGSSIGISIVKDESELKYAKDVAFEFDEDVVVEQFVSNIKEYNLAGCMIGEKMEFSIIEEPRKNEILDFEQKYLGFSESSKVSEANISEELKQKLRDNFTRIYNPLFKGALIRCDFFVIDDEVYLNEINPNPGSLANYLFEDFTNIVDNLAKNIELEKQIKIDYAFIHSINGQKGKL.

The region spanning 133–324 (KLYAQSVGVK…IVDNLAKNIE (192 aa)) is the ATP-grasp domain. An ATP-binding site is contributed by 159 to 211 (LSFPCILKPARLGSSIGISIVKDESELKYAKDVAFEFDEDVVVEQFVSNIKEY). Mg(2+)-binding residues include aspartate 284, glutamate 296, and asparagine 298.

Belongs to the D-alanine--D-alanine ligase family. Requires Mg(2+) as cofactor. Mn(2+) serves as cofactor.

The protein localises to the cytoplasm. The enzyme catalyses 2 D-alanine + ATP = D-alanyl-D-alanine + ADP + phosphate + H(+). The protein operates within cell wall biogenesis; peptidoglycan biosynthesis. Its function is as follows. Cell wall formation. This Campylobacter lari (strain RM2100 / D67 / ATCC BAA-1060) protein is D-alanine--D-alanine ligase.